The chain runs to 440 residues: MPKLVTWMNNQRVGELTKLANGAHTFKYAPEWLASRYARPLSLSLPLQRGNITSDAVFNFFDNLLPDSPIVRDRIVKRYHAKSRQPFDLLSEIGRDSVGAVTLIPEDETVTHPIMAWEKLTEARLEEVLTAYKADIPLGMIREENDFRISVAGAQEKTALLRIGNDWCIPKGITPTTHIIKLPIGEIRQPNATLDLSQSVDNEYYCLLLAKELGLNVPDAEIIKAGNVRALAVERFDRRWNAERTVLLRLPQEDMCQTFGLPSSVKYESDGGPGIARIMAFLMGSSEALKDRYDFMKFQVFQWLIGATDGHAKNFSVFIQAGGSYRLTPFYDIISAFPVLGGTGIHISDLKLAMGLNASKGKKTAIDKIYPRHFLATAKVLRFPEVQMHEILSDFARMIPAALDNVKTSLPTDFPENVVTAVESNVLRLHGRLSREYGSK.

Phosphoserine; by autocatalysis is present on serine 150. ATP contacts are provided by residues 152-157 (AGAQEK), lysine 181, and 234-236 (ERF). The active-site Proton acceptor is aspartate 309. Residues 311–314 (HAKN) and 331–332 (YD) each bind ATP. A DNA-binding region spans residues 379 to 382 (KVLR).

The protein belongs to the HipA Ser/Thr kinase family. In terms of assembly, forms a HipA(2)HipB(2) heterotetramer which can interact with a single operator on DNA. When 2 operators are present each HipB dimer contacts 1 HipA molecule, which are brought together by the DNA bend and dimerize, blocking the HipA active site and inactivating its toxic activity. Mutations present in allele hipA7 (G22S and D291A) decrease the affinity of HipA for HipB. Autophosphorylates intermolecularly on Ser-150; phosphorylated form not seen to bind ATP and no longer has kinase activity.

The enzyme catalyses L-seryl-[protein] + ATP = O-phospho-L-seryl-[protein] + ADP + H(+). It catalyses the reaction L-threonyl-[protein] + ATP = O-phospho-L-threonyl-[protein] + ADP + H(+). Once phosphorylated no longer has kinase activity. In terms of biological role, toxic component of a type II toxin-antitoxin (TA) system, first identified by mutations that increase production of persister cells, a fraction of cells that are phenotypic variants not killed by antibiotics, which lead to multidrug tolerance. Persistence may be ultimately due to global remodeling of the persister cell's ribosomes. Phosphorylates Glu-tRNA-ligase (AC P04805, gltX, on 'Ser-239') in vivo. Phosphorylation of GltX prevents it from being charged, leading to an increase in uncharged tRNA(Glu). This induces amino acid starvation and the stringent response via RelA/SpoT and increased (p)ppGpp levels, which inhibits replication, transcription, translation and cell wall synthesis, reducing growth and leading to persistence and multidrug resistance. Once the level of HipA exceeds a threshold cells become dormant, and the length of dormancy is determined by how much HipA levels exceed the threshold. The hipA7 mutation (a double G22S D291A mutation) leads to increased generation of persister cells (cells that survive antibiotic treatment) probably by entering into a dormant state, as well as cold-sensitivity. Wild-type cells produce persisters at a frequency of 10(-6) to 10(-5) whereas hipA7 cells produce about 100-fold more persisters. hipA7 decreases the affinity for antitoxin HipB, leading to increased HipA levels and persistence; depending on the protein level, can be toxic enough to reduce cell growth or even kill cells. Generation of persister cells requires (p)ppGpp as cells lacking relA or relA/spoT generate fewer or no persister cells respectively compared to hipA7. The toxic effect of HipA is neutralized by its cognate antitoxin HipB. Also neutralized by overexpression of gltX. With HipB acts as a corepressor for transcription of the hipBA promoter; binding of HipA-HipB to DNA induces a 70 degree bend. This brings together and dimerizes 2 HipA molecules, which distorts the promoter region, preventing sigma-factor binding; additionally HipA and HipB would physically prevent RNA core polymerase from contacting the -35 promoter box. May play a role in biofilm formation. This Escherichia coli (strain K12) protein is Serine/threonine-protein kinase toxin HipA (hipA).